We begin with the raw amino-acid sequence, 1135 residues long: DNA-directed RNA polymerase subunit beta' (1135 aa).

Cysteine 60, cysteine 62, cysteine 75, and cysteine 78 together coordinate Zn(2+). Mg(2+) is bound by residues aspartate 450, aspartate 452, and aspartate 454. Zn(2+)-binding residues include cysteine 795, cysteine 869, cysteine 876, and cysteine 879.

Belongs to the RNA polymerase beta' chain family. As to quaternary structure, the RNAP catalytic core consists of 2 alpha, 1 beta, 1 beta' and 1 omega subunit. When a sigma factor is associated with the core the holoenzyme is formed, which can initiate transcription. The cofactor is Mg(2+). It depends on Zn(2+) as a cofactor.

The catalysed reaction is RNA(n) + a ribonucleoside 5'-triphosphate = RNA(n+1) + diphosphate. Its function is as follows. DNA-dependent RNA polymerase catalyzes the transcription of DNA into RNA using the four ribonucleoside triphosphates as substrates. In Clostridium tetani (strain Massachusetts / E88), this protein is DNA-directed RNA polymerase subunit beta'.